The following is a 370-amino-acid chain: Gap junction delta-4 protein (370 aa).

The Cytoplasmic segment spans residues 1–19 (MEGVDLLGFLIITLNCNVT). Residues 20–40 (MXGKLWFVLTMLLRMLVIVLA) traverse the membrane as a helical segment. The Extracellular segment spans residues 41–76 (GRPVYQDEQERFVCNTLQPGCANVCYDVFSPVSHLR). The helical transmembrane segment at 77–97 (FWLIQGVCVLLPSAVFSVYVL) threads the bilayer. Residues 98–146 (HRGATLAALGPRRCPEPRDTASGQRRCPGSCRERGGLEVPDFSAGYIIH) lie on the Cytoplasmic side of the membrane. Residues 147 to 167 (LLLRTLLEAAFGALNYLLFGF) traverse the membrane as a helical segment. At 168–196 (LAPNKFPCTRPPCTGVVDCYVSRPTEKSL) the chain is on the extracellular side. The chain crosses the membrane as a helical span at residues 197-217 (LMLFLWAVSALSFLLGLADLV). At 218-370 (CSLRRLMRRR…HLRARKSEWV (153 aa)) the chain is on the cytoplasmic side. The segment at 227-370 (RPGPPTSPSI…HLRARKSEWV (144 aa)) is disordered. The span at 246 to 260 (PEGRPTDKEGGREQE) shows a compositional bias: basic and acidic residues. Positions 331 to 345 (PSAAPSHLAAHPSCS) are enriched in low complexity.

The protein belongs to the connexin family. Delta-type subfamily. In terms of assembly, a connexon is composed of a hexamer of connexins.

The protein localises to the cell membrane. Its subcellular location is the cell junction. It localises to the gap junction. Its function is as follows. One gap junction consists of a cluster of closely packed pairs of transmembrane channels, the connexons, through which materials of low MW diffuse from one cell to a neighboring cell. The chain is Gap junction delta-4 protein (GJD4) from Macaca fascicularis (Crab-eating macaque).